A 209-amino-acid chain; its full sequence is Cytidylate kinase (209 aa).

Residue 7-15 participates in ATP binding; it reads GVAASGKSS.

Belongs to the cytidylate kinase family. Type 1 subfamily.

The protein localises to the cytoplasm. It catalyses the reaction CMP + ATP = CDP + ADP. The catalysed reaction is dCMP + ATP = dCDP + ADP. This Deinococcus geothermalis (strain DSM 11300 / CIP 105573 / AG-3a) protein is Cytidylate kinase.